Here is a 328-residue protein sequence, read N- to C-terminus: Probable membrane-associated kinase regulator 4 (328 aa).

The interval 213–253 (GQIKTERPKKQSNGSVSGSHRRSFSVSMRRQAAKSSNNKSS) is disordered. The span at 223–240 (QSNGSVSGSHRRSFSVSM) shows a compositional bias: polar residues.

Its subcellular location is the cell membrane. The protein is Probable membrane-associated kinase regulator 4 (MAKR4) of Arabidopsis thaliana (Mouse-ear cress).